The following is a 163-amino-acid chain: Globin CTT-V (163 aa).

Residues 1-16 (MKFFAVLTLCIIGAIA) form the signal peptide. Residues 18 to 163 (PLTSDEANLV…YTVAFEVIPA (146 aa)) enclose the Globin domain. Heme b is bound by residues H76 and H111.

Belongs to the globin family.

The sequence is that of Globin CTT-V (CTT-V) from Chironomus thummi piger (Midge).